A 315-amino-acid polypeptide reads, in one-letter code: Heme oxygenase 2 (315 aa).

A compositionally biased stretch (polar residues) spans 1 to 15 (MSSEVETSEGVDESE). The disordered stretch occupies residues 1-29 (MSSEVETSEGVDESENNSTAPEKENHTKM). S2 is modified (N-acetylserine). S2 carries the phosphoserine modification. At 2–294 (SSEVETSEGV…TAMAVLRKPS (293 aa)) the chain is on the cytoplasmic side. Heme b-binding residues include H44, Y153, K198, and R202. HRM repeat units lie at residues 263–268 (KCPFYA) and 280–285 (NCPFRT). Residues C264 and C281 each carry the S-nitrosocysteine modification. Residues 295 to 315 (LQLILAASVALVAGLLAWYYM) traverse the membrane as a helical; Anchor for type IV membrane protein segment.

This sequence belongs to the heme oxygenase family. In terms of processing, a soluble form arises by proteolytic removal of the membrane anchor. S-nitrosylated by BLVRB. As to expression, widely distributed in body with a high concentration in the brain.

Its subcellular location is the microsome membrane. The protein localises to the endoplasmic reticulum membrane. The catalysed reaction is heme b + 3 reduced [NADPH--hemoprotein reductase] + 3 O2 = biliverdin IXalpha + CO + Fe(2+) + 3 oxidized [NADPH--hemoprotein reductase] + 3 H2O + H(+). Inhibited by metalloporphyrins such as Sn- and Zn-protoporphyrins. Catalyzes the oxidative cleavage of heme at the alpha-methene bridge carbon, released as carbon monoxide (CO), to generate biliverdin IXalpha, while releasing the central heme iron chelate as ferrous iron. The chain is Heme oxygenase 2 (Hmox2) from Rattus norvegicus (Rat).